We begin with the raw amino-acid sequence, 254 residues long: 3-deoxy-manno-octulosonate cytidylyltransferase (254 aa).

The protein belongs to the KdsB family.

The protein resides in the cytoplasm. The catalysed reaction is 3-deoxy-alpha-D-manno-oct-2-ulosonate + CTP = CMP-3-deoxy-beta-D-manno-octulosonate + diphosphate. It functions in the pathway nucleotide-sugar biosynthesis; CMP-3-deoxy-D-manno-octulosonate biosynthesis; CMP-3-deoxy-D-manno-octulosonate from 3-deoxy-D-manno-octulosonate and CTP: step 1/1. It participates in bacterial outer membrane biogenesis; lipopolysaccharide biosynthesis. Functionally, activates KDO (a required 8-carbon sugar) for incorporation into bacterial lipopolysaccharide in Gram-negative bacteria. This chain is 3-deoxy-manno-octulosonate cytidylyltransferase, found in Nitrobacter winogradskyi (strain ATCC 25391 / DSM 10237 / CIP 104748 / NCIMB 11846 / Nb-255).